A 382-amino-acid polypeptide reads, in one-letter code: Galactokinase (382 aa).

Substrate is bound at residue 34–37 (EHTD). Residue 124 to 130 (GAGLSSS) coordinates ATP. Mg(2+)-binding residues include Ser130 and Glu162. Asp174 acts as the Proton acceptor in catalysis. Tyr223 serves as a coordination point for substrate.

The protein belongs to the GHMP kinase family. GalK subfamily.

It localises to the cytoplasm. It carries out the reaction alpha-D-galactose + ATP = alpha-D-galactose 1-phosphate + ADP + H(+). It participates in carbohydrate metabolism; galactose metabolism. Functionally, catalyzes the transfer of the gamma-phosphate of ATP to D-galactose to form alpha-D-galactose-1-phosphate (Gal-1-P). This Salmonella typhi protein is Galactokinase.